The chain runs to 624 residues: Chaperone protein HtpG (624 aa).

The interval 1-336 is a; substrate-binding; it reads MKGQETRGFQ…SNDLPLNVSR (336 aa). Residues 337–552 are b; the sequence is EILQDSTVTR…ADEMSTQMAK (216 aa). The tract at residues 553-624 is c; sequence LFAAAGQSVP…IRRMNQLLVS (72 aa).

The protein belongs to the heat shock protein 90 family. In terms of assembly, homodimer.

It localises to the cytoplasm. Functionally, molecular chaperone. Has ATPase activity. The chain is Chaperone protein HtpG from Salmonella choleraesuis (strain SC-B67).